The primary structure comprises 491 residues: ATP synthase subunit beta, chloroplastic (491 aa).

Residue 172–179 coordinates ATP; it reads GGAGVGKT.

It belongs to the ATPase alpha/beta chains family. F-type ATPases have 2 components, CF(1) - the catalytic core - and CF(0) - the membrane proton channel. CF(1) has five subunits: alpha(3), beta(3), gamma(1), delta(1), epsilon(1). CF(0) has four main subunits: a(1), b(1), b'(1) and c(9-12).

It is found in the plastid. The protein resides in the chloroplast thylakoid membrane. It catalyses the reaction ATP + H2O + 4 H(+)(in) = ADP + phosphate + 5 H(+)(out). In terms of biological role, produces ATP from ADP in the presence of a proton gradient across the membrane. The catalytic sites are hosted primarily by the beta subunits. In Pisum sativum (Garden pea), this protein is ATP synthase subunit beta, chloroplastic.